Reading from the N-terminus, the 366-residue chain is tRNA/tmRNA (uracil-C(5))-methyltransferase (366 aa).

5 residues coordinate S-adenosyl-L-methionine: Gln-190, Tyr-218, Asn-223, Glu-239, and Asp-299. Catalysis depends on Cys-324, which acts as the Nucleophile. Glu-358 serves as the catalytic Proton acceptor.

Belongs to the class I-like SAM-binding methyltransferase superfamily. RNA M5U methyltransferase family. TrmA subfamily.

It carries out the reaction uridine(54) in tRNA + S-adenosyl-L-methionine = 5-methyluridine(54) in tRNA + S-adenosyl-L-homocysteine + H(+). The catalysed reaction is uridine(341) in tmRNA + S-adenosyl-L-methionine = 5-methyluridine(341) in tmRNA + S-adenosyl-L-homocysteine + H(+). Dual-specificity methyltransferase that catalyzes the formation of 5-methyluridine at position 54 (m5U54) in all tRNAs, and that of position 341 (m5U341) in tmRNA (transfer-mRNA). This chain is tRNA/tmRNA (uracil-C(5))-methyltransferase, found in Shigella boydii serotype 18 (strain CDC 3083-94 / BS512).